The sequence spans 538 residues: Hydroxylamine reductase (538 aa).

[4Fe-4S] cluster is bound by residues Cys3, Cys6, Cys15, and Cys21. Residues His239, Glu263, Cys307, Cys394, Cys422, Cys447, Glu481, and Lys483 each contribute to the hybrid [4Fe-2O-2S] cluster site. A Cysteine persulfide modification is found at Cys394.

It belongs to the HCP family. [4Fe-4S] cluster serves as cofactor. Requires hybrid [4Fe-2O-2S] cluster as cofactor.

The protein resides in the cytoplasm. It catalyses the reaction A + NH4(+) + H2O = hydroxylamine + AH2 + H(+). Its function is as follows. Catalyzes the reduction of hydroxylamine to form NH(3) and H(2)O. The polypeptide is Hydroxylamine reductase (Solidesulfovibrio magneticus (strain ATCC 700980 / DSM 13731 / RS-1) (Desulfovibrio magneticus)).